A 245-amino-acid polypeptide reads, in one-letter code: Ribonuclease 3 (245 aa).

Residues Leu-18–Gly-146 form the RNase III domain. Position 59 (Glu-59) interacts with Mg(2+). The active site involves Asp-63. Mg(2+) contacts are provided by Asp-132 and Glu-135. The active site involves Glu-135. Positions Asp-173–Asn-242 constitute a DRBM domain.

This sequence belongs to the ribonuclease III family. As to quaternary structure, homodimer. The cofactor is Mg(2+).

Its subcellular location is the cytoplasm. It catalyses the reaction Endonucleolytic cleavage to 5'-phosphomonoester.. Its function is as follows. Digests double-stranded RNA. Involved in the processing of primary rRNA transcript to yield the immediate precursors to the large and small rRNAs (23S and 16S). Processes some mRNAs, and tRNAs when they are encoded in the rRNA operon. Processes pre-crRNA and tracrRNA of type II CRISPR loci if present in the organism. This Borreliella burgdorferi (strain ATCC 35210 / DSM 4680 / CIP 102532 / B31) (Borrelia burgdorferi) protein is Ribonuclease 3.